Reading from the N-terminus, the 151-residue chain is MATQDDAHLAELKKKRTFRKFMYRGVDLDQLLDMSREQFTKLLPCRMRRRLDRGLKRKHLALIAKVQKAKKAAGVLEKPATVKTHLRDMIILPELVGGVIGIYNGKVFNQTEIKPEMIGFYLGEFAISYKPVKHGRPGIGATHSSRFIPLK.

Alanine 2 carries the post-translational modification N-acetylalanine.

The protein belongs to the universal ribosomal protein uS19 family.

Negatively regulates lifespan. This chain is Small ribosomal subunit protein uS19, found in Caenorhabditis elegans.